The sequence spans 310 residues: Ninja-family protein 3 (310 aa).

Disordered regions lie at residues 1-29 (MASR…GEPD), 68-140 (SLPG…DDAQ), and 156-215 (DQGN…EQPP). Basic and acidic residues predominate over residues 99-108 (ERWRRREMQS). Polar residues-rich tracts occupy residues 156–166 (DQGNASSSMPE) and 176–193 (KSTS…QNKS).

This sequence belongs to the Ninja family.

The protein localises to the nucleus. In Triticum aestivum (Wheat), this protein is Ninja-family protein 3 (AFP-D1).